Here is a 137-residue protein sequence, read N- to C-terminus: Small ribosomal subunit protein bS16 (137 aa).

Basic and acidic residues predominate over residues 104-118 (ADEKKKPVLKPKTEK). The interval 104–137 (ADEKKKPVLKPKTEKAAPAPEAAAPEAESTEEQA) is disordered. A compositionally biased stretch (low complexity) spans 119–130 (AAPAPEAAAPEA).

Belongs to the bacterial ribosomal protein bS16 family.

In Clavibacter michiganensis subsp. michiganensis (strain NCPPB 382), this protein is Small ribosomal subunit protein bS16.